The sequence spans 1032 residues: Error-prone DNA polymerase (1032 aa).

The protein belongs to the DNA polymerase type-C family. DnaE2 subfamily.

It localises to the cytoplasm. It catalyses the reaction DNA(n) + a 2'-deoxyribonucleoside 5'-triphosphate = DNA(n+1) + diphosphate. In terms of biological role, DNA polymerase involved in damage-induced mutagenesis and translesion synthesis (TLS). It is not the major replicative DNA polymerase. The polypeptide is Error-prone DNA polymerase (Hahella chejuensis (strain KCTC 2396)).